A 610-amino-acid polypeptide reads, in one-letter code: UvrABC system protein C (610 aa).

The region spanning 16–94 (SQPGVYRMYD…IKLYQPRYNV (79 aa)) is the GIY-YIG domain. The UVR domain maps to 204–239 (DQVLTQLISRMETASQNLEFEEAARIRDQIQAVRRV).

It belongs to the UvrC family. In terms of assembly, interacts with UvrB in an incision complex.

The protein resides in the cytoplasm. Its function is as follows. The UvrABC repair system catalyzes the recognition and processing of DNA lesions. UvrC both incises the 5' and 3' sides of the lesion. The N-terminal half is responsible for the 3' incision and the C-terminal half is responsible for the 5' incision. This is UvrABC system protein C from Shigella boydii serotype 18 (strain CDC 3083-94 / BS512).